A 360-amino-acid polypeptide reads, in one-letter code: Protein phosphatase 1L (360 aa).

The Extracellular portion of the chain corresponds to 1 to 25; the sequence is MIEDTMTLLSLLGRIMRYFLLRPET. A helical membrane pass occupies residues 26–42; it reads LFLLCISLALWSYFFHT. Over 43–360 the chain is Cytoplasmic; sequence DEVKTIVKSS…FRNSSKTEEQ (318 aa). Residues 92–351 enclose the PPM-type phosphatase domain; sequence NVAVYSIQGR…DNITVMVVKF (260 aa). 4 residues coordinate Mn(2+): D128, G129, D302, and D342.

Belongs to the PP2C family. In terms of assembly, interacts with MAP3K7/TAK1 and MAP3K5. The cofactor is Mg(2+). Requires Mn(2+) as cofactor.

Its subcellular location is the membrane. The catalysed reaction is O-phospho-L-seryl-[protein] + H2O = L-seryl-[protein] + phosphate. It catalyses the reaction O-phospho-L-threonyl-[protein] + H2O = L-threonyl-[protein] + phosphate. Acts as a suppressor of the SAPK signaling pathways by associating with and dephosphorylating MAP3K7/TAK1 and MAP3K5, and by attenuating the association between MAP3K7/TAK1 and MAP2K4 or MAP2K6. This chain is Protein phosphatase 1L (PPM1L), found in Bos taurus (Bovine).